A 343-amino-acid polypeptide reads, in one-letter code: Inositol 2-dehydrogenase (343 aa).

This sequence belongs to the Gfo/Idh/MocA family. Homotetramer.

It carries out the reaction myo-inositol + NAD(+) = scyllo-inosose + NADH + H(+). Functionally, involved in the oxidation of myo-inositol (MI) to 2-keto-myo-inositol (2KMI or 2-inosose). This chain is Inositol 2-dehydrogenase, found in Streptomyces avermitilis (strain ATCC 31267 / DSM 46492 / JCM 5070 / NBRC 14893 / NCIMB 12804 / NRRL 8165 / MA-4680).